Consider the following 229-residue polypeptide: Peptidase E (229 aa).

Residues Ser120, Asp135, and His157 each act as charge relay system in the active site.

The protein belongs to the peptidase S51 family.

The protein resides in the cytoplasm. The enzyme catalyses Dipeptidase E catalyzes the hydrolysis of dipeptides Asp-|-Xaa. It does not act on peptides with N-terminal Glu, Asn or Gln, nor does it cleave isoaspartyl peptides.. Hydrolyzes dipeptides containing N-terminal aspartate residues. May play a role in allowing the cell to use peptide aspartate to spare carbon otherwise required for the synthesis of the aspartate family of amino acids. The sequence is that of Peptidase E from Salmonella arizonae (strain ATCC BAA-731 / CDC346-86 / RSK2980).